Here is a 390-residue protein sequence, read N- to C-terminus: Glucose-fructose oxidoreductase domain-containing protein 1 (390 aa).

Positions 1-21 (MLPGVGVFGTSLTARVIIPLL) are cleaved as a signal peptide.

The protein belongs to the Gfo/Idh/MocA family. Homodimer. Interacts with NKIRAS2.

Its subcellular location is the secreted. Functionally, probably catalytically inactive enzyme. Does not bind NAD or NADP. The protein is Glucose-fructose oxidoreductase domain-containing protein 1 (Gfod1) of Mus musculus (Mouse).